A 302-amino-acid chain; its full sequence is Homoserine O-acetyltransferase 1 (302 aa).

Cysteine 142 (acyl-thioester intermediate) is an active-site residue. Positions 163 and 192 each coordinate substrate. Histidine 235 (proton acceptor) is an active-site residue. Residue glutamate 237 is part of the active site. Arginine 249 is a binding site for substrate.

This sequence belongs to the MetA family.

It localises to the cytoplasm. The catalysed reaction is L-homoserine + acetyl-CoA = O-acetyl-L-homoserine + CoA. It participates in amino-acid biosynthesis; L-methionine biosynthesis via de novo pathway; O-acetyl-L-homoserine from L-homoserine: step 1/1. In terms of biological role, transfers an acetyl group from acetyl-CoA to L-homoserine, forming acetyl-L-homoserine. In Ilyobacter polytropus (strain ATCC 51220 / DSM 2926 / LMG 16218 / CuHBu1), this protein is Homoserine O-acetyltransferase 1.